The sequence spans 526 residues: Zinc finger protein Helios (526 aa).

The disordered stretch occupies residues 28-94; it reads DLTSSTPNGQ…IESSEVADNR (67 aa). Residues 29-50 are compositionally biased toward polar residues; that stretch reads LTSSTPNGQHASPSHMTSTNSV. Residue Ser-56 is modified to Phosphoserine. The span at 61–77 shows a compositional bias: basic and acidic residues; the sequence is DRQPLSREDEIRGHDEG. Ser-78 and Ser-79 each carry phosphoserine. Lys-95 is covalently cross-linked (Glycyl lysine isopeptide (Lys-Gly) (interchain with G-Cter in SUMO2)). C2H2-type zinc fingers lie at residues 112–134, 140–162, 168–190, and 196–219; these read LKCD…KRSH, FHCN…IKLH, FKCP…LRTH, and HKCN…ERCH. Lys-288 carries the N6-acetyllysine modification. The segment covering 368–379 has biased composition (basic and acidic residues); it reads ISRETSDSHENN. The disordered stretch occupies residues 368–435; the sequence is ISRETSDSHE…LNPKRKQSPA (68 aa). Residues Lys-442 and Lys-448 each participate in a glycyl lysine isopeptide (Lys-Gly) (interchain with G-Cter in SUMO2) cross-link. C2H2-type zinc fingers lie at residues 471–493 and 499–523; these read FKCE…MGCH and LECN…RGEH.

Belongs to the Ikaros C2H2-type zinc-finger protein family. Can form homodimers. Interacts with IKZF4 and IKZF5. As to expression, expressed in outer hair cells (OHC) of the organ of Corti. Abundant in thymus, low expression in bone marrow and brain and no detectable expression in spleen, liver, kidney or muscle. Expressed in T-cells.

It localises to the nucleus. Its function is as follows. Transcriptional regulator required for outer hair cells (OHC) maturation and, consequently, for hearing. The chain is Zinc finger protein Helios (Ikzf2) from Mus musculus (Mouse).